A 461-amino-acid chain; its full sequence is Protein ultraspiracle homolog (461 aa).

The interval 1-112 (MSSVAKKDKR…NHPLSGSKHL (112 aa)) is modulating. The disordered stretch occupies residues 26 to 51 (PAPHQQQSMPSSQPSNFLQPLATPST). Residues 27–40 (APHQQQSMPSSQPS) show a composition bias toward low complexity. Residues 41-51 (NFLQPLATPST) show a composition bias toward polar residues. 2 NR C4-type zinc fingers span residues 113–133 (CSICGDRASGKHYGVYSCEGC) and 149–173 (CREDRNCIIDKRQRNRCQYCRYQKC). The segment at residues 113 to 185 (CSICGDRASG…CGMKREAVQE (73 aa)) is a DNA-binding region (nuclear receptor). Positions 185-192 (EERQRAAR) are hinge. Residues 203–452 (VQELSIERLL…SYIHDALRNH (250 aa)) form the NR LBD domain.

Belongs to the nuclear hormone receptor family. NR2 subfamily. As to quaternary structure, heterodimer of USP and ECR. Only the heterodimer is capable of high-affinity binding to ecdysone.

It localises to the nucleus. Its function is as follows. Receptor for ecdysone. May be an important modulator of insect metamorphosis. The sequence is that of Protein ultraspiracle homolog (USP) from Manduca sexta (Tobacco hawkmoth).